A 256-amino-acid polypeptide reads, in one-letter code: uncharacterized protein (256 aa).

The signal sequence occupies residues 1 to 24 (MIKRVNKLVLGISLLFLVISITAG). C25 carries N-palmitoyl cysteine lipidation. C25 carries S-diacylglycerol cysteine lipidation.

It belongs to the staphylococcal tandem lipoprotein family.

The protein localises to the cell membrane. This is an uncharacterized protein from Staphylococcus aureus (strain MW2).